The primary structure comprises 72 residues: Translation initiation factor IF-1 (72 aa).

One can recognise an S1-like domain in the interval 1 to 72; it reads MAKEELLEFP…TKGRITYRFK (72 aa).

This sequence belongs to the IF-1 family. As to quaternary structure, component of the 30S ribosomal translation pre-initiation complex which assembles on the 30S ribosome in the order IF-2 and IF-3, IF-1 and N-formylmethionyl-tRNA(fMet); mRNA recruitment can occur at any time during PIC assembly.

The protein localises to the cytoplasm. Its function is as follows. One of the essential components for the initiation of protein synthesis. Stabilizes the binding of IF-2 and IF-3 on the 30S subunit to which N-formylmethionyl-tRNA(fMet) subsequently binds. Helps modulate mRNA selection, yielding the 30S pre-initiation complex (PIC). Upon addition of the 50S ribosomal subunit IF-1, IF-2 and IF-3 are released leaving the mature 70S translation initiation complex. The protein is Translation initiation factor IF-1 of Caulobacter vibrioides (strain ATCC 19089 / CIP 103742 / CB 15) (Caulobacter crescentus).